Consider the following 143-residue polypeptide: Nucleoside diphosphate kinase (143 aa).

Lysine 11, phenylalanine 59, arginine 87, threonine 93, arginine 104, and asparagine 114 together coordinate ATP. Catalysis depends on histidine 117, which acts as the Pros-phosphohistidine intermediate.

Belongs to the NDK family. In terms of assembly, homotetramer. It depends on Mg(2+) as a cofactor.

The protein resides in the cytoplasm. It carries out the reaction a 2'-deoxyribonucleoside 5'-diphosphate + ATP = a 2'-deoxyribonucleoside 5'-triphosphate + ADP. The catalysed reaction is a ribonucleoside 5'-diphosphate + ATP = a ribonucleoside 5'-triphosphate + ADP. In terms of biological role, major role in the synthesis of nucleoside triphosphates other than ATP. The ATP gamma phosphate is transferred to the NDP beta phosphate via a ping-pong mechanism, using a phosphorylated active-site intermediate. The polypeptide is Nucleoside diphosphate kinase (Alcanivorax borkumensis (strain ATCC 700651 / DSM 11573 / NCIMB 13689 / SK2)).